Consider the following 423-residue polypeptide: Hydroxymethylglutaryl-CoA synthase-like protein AKT4-1 (423 aa).

The protein belongs to the thiolase-like superfamily. HMG-CoA synthase family.

Its pathway is mycotoxin biosynthesis. In terms of biological role, hydroxymethylglutaryl-CoA synthase-like protein; part of the gene clusters that mediate the biosynthesis of the host-selective toxins (HSTs) AK-toxins responsible for Japanese pear black spot disease by the Japanese pear pathotype. AK-toxins are esters of 9,10-epoxy 8-hydroxy 9-methyldecatrienoic acid (EDA). On cellular level, AK-toxins affect plasma membrane of susceptible cells and cause a sudden increase in loss of K(+) after a few minutes of toxin treatment. The acyl-CoA ligase AKT1, the hydrolase AKT2 and enoyl-CoA hydratase AKT3 are all involved in the biosynthesis of the AK-, AF- and ACT-toxin common 9,10-epoxy-8-hydroxy-9-methyl-decatrienoic acid (EDA) structural moiety. Part of the EDA biosynthesis occurs in the peroxisome since these 3 enzymes are localized in peroxisomes. The exact roles of the 3 enzymes, as well as of additional AK-toxin clusters enzymes, including AKT4, AKT6 and AKTS1, have still to be elucidated. The Cytochrome P450 monooxygenase AKT7 on the other side functions to limit production of EDA and AK-toxin, probably via the catalysis of a side reaction of EDA or its precursor. The protein is Hydroxymethylglutaryl-CoA synthase-like protein AKT4-1 of Alternaria alternata (Alternaria rot fungus).